We begin with the raw amino-acid sequence, 63 residues long: Beta-defensin 4 (63 aa).

Positions 1–22 (MRLHHLLLAVLFLVLSAGSGFT) are cleaved as a signal peptide. The residue at position 23 (Q23) is a Pyrrolidone carboxylic acid. 3 disulfides stabilise this stretch: C31–C60, C38–C53, and C43–C61.

The protein belongs to the beta-defensin family. In terms of tissue distribution, neutrophilic granules.

It is found in the secreted. Has bactericidal activity. Active against E.coli ML35 and S.aureus 502A. The sequence is that of Beta-defensin 4 (DEFB4) from Bos taurus (Bovine).